The following is a 241-amino-acid chain: MGRGRVQLKRIENKINRQVTFSKRRTGLLKKAHEISVLCDAEVALIVFSTKGKLFEYSTDSCMEKILDRYERYSYAERQLTATDPESQGNWSLEYSKLKAKIELLQRSQRHFLGEDLDSLSLKELQNLEQQLDTALKHIRSRKNQLMYESISELQRKEKAMQEQNNMLAKEIKEKEKTVAQQTHWEQQNHGLNTSSFLLPQQLPCLNMGGTYQGEAHGARRNELDLTLEPIYPSHLGCFTT.

Positions 1–61 (MGRGRVQLKR…GKLFEYSTDS (61 aa)) constitute an MADS-box domain. The K-box domain occupies 88 to 178 (QGNWSLEYSK…AKEIKEKEKT (91 aa)).

Expressed in tendrils and flowers.

It localises to the nucleus. Functionally, probable transcription factor involved in flower development. This is Agamous-like MADS-box protein AP1 from Vitis vinifera (Grape).